Consider the following 436-residue polypeptide: Serine/threonine-protein kinase STK11 (436 aa).

Serine 31 bears the Phosphoserine mark. Residues lysine 44 and lysine 48 each carry the N6-acetyllysine modification. A sufficient for interaction with SIRT1 region spans residues 45 to 90 (LIGKYLMGDLLGEGSYGKVKEVLDSETLCRRAVKILKKKKLRRIPN). Residues 49 to 309 (YLMGDLLGEG…IRQIRQHSWF (261 aa)) form the Protein kinase domain. Residues 55-63 (LGEGSYGKV) and lysine 78 each bind ATP. Residues lysine 96 and lysine 97 each carry the N6-acetyllysine modification. Aspartate 176 (proton acceptor) is an active-site residue. At threonine 189 the chain carries Phosphothreonine; by autocatalysis. Residues lysine 296 and lysine 311 each carry the N6-acetyllysine modification. The residue at position 325 (serine 325) is a Phosphoserine. Residue threonine 336 is modified to Phosphothreonine; by autocatalysis. Phosphothreonine; by ATM and autocatalysis is present on threonine 366. The disordered stretch occupies residues 397 to 421 (GTEPQLSSKVKPEGRPGAANPARKV). Serine 403 is modified (phosphoserine). An N6-acetyllysine modification is found at lysine 420. Cysteine 422 carries S-palmitoyl cysteine lipidation. Lysine 426 carries the N6-acetyllysine modification. Serine 431 is modified (phosphoserine; by autocatalysis, PKA, PKC/PRKCZ and RPS6KA1). Cysteine 433 bears the Cysteine methyl ester mark. Residue cysteine 433 is the site of S-farnesyl cysteine attachment. Residue lysine 434 is modified to N6-acetyllysine. The propeptide at 434–436 (KQQ) is removed in mature form.

Belongs to the protein kinase superfamily. CAMK Ser/Thr protein kinase family. LKB1 subfamily. In terms of assembly, catalytic component of a trimeric complex composed of STK11/LKB1, STRAD (STRADA or STRADB) and CAB39/MO25 (CAB39/MO25alpha or CAB39L/MO25beta): the complex tethers STK11/LKB1 in the cytoplasm and stimulates its catalytic activity. Found in a ternary complex composed of SMAD4, STK11/LKB1 and STK11IP. Interacts with NR4A1, p53/TP53, SMAD4, STK11IP and WDR6. Interacts with NISCH; this interaction may increase STK11 activity. Interacts with SIRT1; the interaction deacetylates STK11. Interacts with CDKN1A. The cofactor is Mg(2+). Mn(2+) serves as cofactor. In terms of processing, phosphorylated by ATM at Thr-366 following ionizing radiation (IR). Phosphorylation at Ser-431 by RPS6KA1 and/or some PKA is required to inhibit cell growth. Phosphorylation at Ser-431 is also required during neuronal polarization to mediate phosphorylation of BRSK1 and BRSK2. Phosphorylation by PKC/PRKCZ at Ser-397 in isoform 2 promotes metformin (or peroxynitrite)-induced nuclear export of STK11 and activation of AMPK. UV radiation -induced phosphorylation at Thr-366 mediates CDKN1A degradation. Acetylated. Deacetylation at Lys-48 enhances cytoplasmic localization and kinase activity in vitro. Expressed in brain, heart, testis, skeletal muscle and spleen, and weakly in liver and kidney. Isoform 1 is expressed at highest levels in the brain. Isoform 2 is expressed at highest levels in the testis, primarily in postmitotic developing germ cells (at protein level).

The protein localises to the nucleus. The protein resides in the cytoplasm. It localises to the membrane. It is found in the mitochondrion. It carries out the reaction L-seryl-[protein] + ATP = O-phospho-L-seryl-[protein] + ADP + H(+). The enzyme catalyses L-threonyl-[protein] + ATP = O-phospho-L-threonyl-[protein] + ADP + H(+). With respect to regulation, activated by forming a complex with STRAD (STRADA or STRADB) and CAB39/MO25 (CAB39/MO25alpha or CAB39L/MO25beta): STRADA (or STRADB)-binding promotes a conformational change of STK11/LKB1 in an active conformation, which is stabilized by CAB39/MO25alpha (or CAB39L/MO25beta) interacting with the STK11/LKB1 activation loop. Sequestration in the nucleus by NR4A1 prevents it from phosphorylating and activating cytoplasmic AMPK. In terms of biological role, tumor suppressor serine/threonine-protein kinase that controls the activity of AMP-activated protein kinase (AMPK) family members, thereby playing a role in various processes such as cell metabolism, cell polarity, apoptosis and DNA damage response. Acts by phosphorylating the T-loop of AMPK family proteins, thus promoting their activity: phosphorylates PRKAA1, PRKAA2, BRSK1, BRSK2, MARK1, MARK2, MARK3, MARK4, NUAK1, NUAK2, SIK1, SIK2, SIK3 and SNRK but not MELK. Also phosphorylates non-AMPK family proteins such as STRADA, PTEN and possibly p53/TP53. Acts as a key upstream regulator of AMPK by mediating phosphorylation and activation of AMPK catalytic subunits PRKAA1 and PRKAA2 and thereby regulates processes including: inhibition of signaling pathways that promote cell growth and proliferation when energy levels are low, glucose homeostasis in liver, activation of autophagy when cells undergo nutrient deprivation, and B-cell differentiation in the germinal center in response to DNA damage. Also acts as a regulator of cellular polarity by remodeling the actin cytoskeleton. Required for cortical neuron polarization by mediating phosphorylation and activation of BRSK1 and BRSK2, leading to axon initiation and specification. Involved in DNA damage response: interacts with p53/TP53 and recruited to the CDKN1A/WAF1 promoter to participate in transcription activation. Able to phosphorylate p53/TP53; the relevance of such result in vivo is however unclear and phosphorylation may be indirect and mediated by downstream STK11/LKB1 kinase NUAK1. Also acts as a mediator of p53/TP53-dependent apoptosis via interaction with p53/TP53: translocates to the mitochondrion during apoptosis and regulates p53/TP53-dependent apoptosis pathways. Regulates UV radiation-induced DNA damage response mediated by CDKN1A. In association with NUAK1, phosphorylates CDKN1A in response to UV radiation and contributes to its degradation which is necessary for optimal DNA repair. Its function is as follows. Has a role in spermiogenesis. This Rattus norvegicus (Rat) protein is Serine/threonine-protein kinase STK11.